A 310-amino-acid polypeptide reads, in one-letter code: Leucine carboxyl methyltransferase 1 (310 aa).

S-adenosyl-L-methionine-binding positions include Arg50, Gly75, Asp100, 145-146 (DI), and Glu169.

It belongs to the methyltransferase superfamily. LCMT family.

It catalyses the reaction [phosphatase 2A protein]-C-terminal L-leucine + S-adenosyl-L-methionine = [phosphatase 2A protein]-C-terminal L-leucine methyl ester + S-adenosyl-L-homocysteine. Functionally, methylates the carboxyl group of the C-terminal leucine residue of protein phosphatase 2A catalytic subunits to form alpha-leucine ester residues. The polypeptide is Leucine carboxyl methyltransferase 1 (ppm1) (Schizosaccharomyces pombe (strain 972 / ATCC 24843) (Fission yeast)).